The chain runs to 408 residues: Multidrug resistance protein MdtG (408 aa).

10 consecutive transmembrane segments (helical) span residues 16-36 (LIVAWLGCFLTGAAFSLVMPF), 58-78 (IVFSITFLFSAIASPFWGGLA), 92-112 (LGMGIVMVLMGLAQNIWQFLI), 115-135 (ALLGLLGGFVPNANALIATQV), 146-166 (TLSTGGVSGALLGPMAGGLLA), 173-193 (PVFFITASVLILCFFVTLFCI), 221-241 (ILSLFVTTLIIQVATGSIAPI), 256-276 (VAFISGMIASVPGVAALLSAP), 290-310 (ILITALIFSVLLLIPMSYVQT), and 378-398 (AVFLVTAGVVLFNAVYSWNSL).

It belongs to the major facilitator superfamily. DHA1 family. MdtG (TC 2.A.1.2.20) subfamily.

The protein resides in the cell inner membrane. Confers resistance to fosfomycin and deoxycholate. The chain is Multidrug resistance protein MdtG from Escherichia coli (strain SMS-3-5 / SECEC).